Reading from the N-terminus, the 1166-residue chain is Peroxisomal ATPase PEX6 (1166 aa).

This sequence belongs to the AAA ATPase family. In terms of assembly, interacts with PEX1; forming the PEX1-PEX6 AAA ATPase complex, which is composed of a heterohexamer formed by a trimer of PEX1-PEX6 dimers.

It is found in the membrane. It carries out the reaction ATP + H2O = ADP + phosphate + H(+). In terms of biological role, component of the PEX1-PEX6 AAA ATPase complex involved in peroxisome biosynthesis. The complex acts as a protein dislocase complex that mediates the ATP-dependent extraction of the PEX5 receptor from peroxisomal membranes, an essential step for PEX5 recycling. Specifically recognizes PEX5 monoubiquitinated at 'Cys-6', and pulls it out of the peroxisome lumen through the PEX2-PEX10-PEX12 retrotranslocation channel. Extraction by the PEX1-PEX6 AAA ATPase complex is accompanied by unfolding of the TPR repeats and release of bound cargo from PEX5. The chain is Peroxisomal ATPase PEX6 from Komagataella phaffii (strain GS115 / ATCC 20864) (Yeast).